Reading from the N-terminus, the 261-residue chain is Enolase-phosphatase E1 (261 aa).

Residues Asp16 and Glu18 each coordinate Mg(2+). Substrate-binding positions include 153–154 (SS) and Lys187. Asp212 lines the Mg(2+) pocket.

The protein belongs to the HAD-like hydrolase superfamily. MasA/MtnC family. As to quaternary structure, monomer. Mg(2+) serves as cofactor.

It localises to the cytoplasm. It is found in the nucleus. It catalyses the reaction 5-methylsulfanyl-2,3-dioxopentyl phosphate + H2O = 1,2-dihydroxy-5-(methylsulfanyl)pent-1-en-3-one + phosphate. It participates in amino-acid biosynthesis; L-methionine biosynthesis via salvage pathway; L-methionine from S-methyl-5-thio-alpha-D-ribose 1-phosphate: step 3/6. It functions in the pathway amino-acid biosynthesis; L-methionine biosynthesis via salvage pathway; L-methionine from S-methyl-5-thio-alpha-D-ribose 1-phosphate: step 4/6. Bifunctional enzyme that catalyzes the enolization of 2,3-diketo-5-methylthiopentyl-1-phosphate (DK-MTP-1-P) into the intermediate 2-hydroxy-3-keto-5-methylthiopentenyl-1-phosphate (HK-MTPenyl-1-P), which is then dephosphorylated to form the acireductone 1,2-dihydroxy-3-keto-5-methylthiopentene (DHK-MTPene). The polypeptide is Enolase-phosphatase E1 (Bos taurus (Bovine)).